A 97-amino-acid polypeptide reads, in one-letter code: Secreted Ly-6/uPAR domain-containing protein 2 (97 aa).

The first 22 residues, 1–22 (MQFHTGLLLAAVLSLQLAAAQA), serve as a signal peptide directing secretion. A UPAR/Ly6 domain is found at 23–95 (LWCHQCTGFG…IACCQTSLCN (73 aa)). 5 cysteine pairs are disulfide-bonded: Cys25/Cys47, Cys28/Cys34, Cys40/Cys68, Cys72/Cys88, and Cys89/Cys94.

As to quaternary structure, interacts with CHRNA3, CHRNA4, CHRNA5, CHRNA7, CHRNB2 and CHRNB4. Interacts with CHRM1 and CHRM3 probably in an allosteric manner.

The protein resides in the secreted. Its function is as follows. Binds and may modulate the functional properties of nicotinic and muscarinic acetylcholine receptors. May regulate keratinocytes proliferation, differentiation and apoptosis. In vitro moderately inhibits ACh-evoked currents of alpha-3:beta-2-containing nAChRs, strongly these of alpha-4:beta-2-containing nAChRs, modulates alpha-7-containing nAChRs, and inhibits nicotine-induced signaling probably implicating alpha-3:beta-4-containing nAChRs. Proposed to act on alpha-3:beta-2 and alpha-7 nAChRs in an orthosteric, and on mAChRs, such as CHRM1 and CHRM3, in an allosteric manner. The protein is Secreted Ly-6/uPAR domain-containing protein 2 of Macaca mulatta (Rhesus macaque).